The primary structure comprises 332 residues: Transaldolase (332 aa).

The Schiff-base intermediate with substrate role is filled by K135.

It belongs to the transaldolase family. Type 1 subfamily. As to quaternary structure, homodimer.

It localises to the cytoplasm. The catalysed reaction is D-sedoheptulose 7-phosphate + D-glyceraldehyde 3-phosphate = D-erythrose 4-phosphate + beta-D-fructose 6-phosphate. The protein operates within carbohydrate degradation; pentose phosphate pathway; D-glyceraldehyde 3-phosphate and beta-D-fructose 6-phosphate from D-ribose 5-phosphate and D-xylulose 5-phosphate (non-oxidative stage): step 2/3. Its function is as follows. Transaldolase is important for the balance of metabolites in the pentose-phosphate pathway. The polypeptide is Transaldolase (Prochlorococcus marinus (strain NATL2A)).